The primary structure comprises 219 residues: Response regulator ArlR (219 aa).

The Response regulatory domain occupies 3–116; it reads NILIVEDEQN…ELFARIRAVL (114 aa). At Asp52 the chain carries 4-aspartylphosphate. The segment at residues 122–219 is a DNA-binding region (ompR/PhoB-type); the sequence is KDIIDINGIK…TVRGVGYVIR (98 aa).

In terms of processing, phosphorylated by ArlS.

The protein localises to the cytoplasm. In terms of biological role, member of the two-component regulatory system ArlS/ArlR. The protein is Response regulator ArlR (arlR) of Staphylococcus haemolyticus (strain JCSC1435).